The primary structure comprises 449 residues: Hyaluronidase-1 (449 aa).

An N-terminal signal peptide occupies residues 1–23 (MYHLWIKCLAAWIFLKRCNGVHA). 2 disulfide bridges follow: Cys47–Cys340 and Cys211–Cys227. Residues Asn67, Asn103, and Asn111 are each glycosylated (N-linked (GlcNAc...) asparagine). Glu135 (proton donor) is an active-site residue. A glycan (N-linked (GlcNAc...) asparagine) is linked at Asn153. Asn357 is a glycosylation site (N-linked (GlcNAc...) asparagine). 3 disulfide bridges follow: Cys365–Cys376, Cys370–Cys427, and Cys429–Cys438. Residue Asn401 is glycosylated (N-linked (GlcNAc...) asparagine). An EGF-like domain is found at 427-438 (CQCYQGWKGLYC).

It belongs to the glycosyl hydrolase 56 family. Monomer. In terms of tissue distribution, expressed by the venom gland.

It is found in the secreted. The catalysed reaction is Random hydrolysis of (1-&gt;4)-linkages between N-acetyl-beta-D-glucosamine and D-glucuronate residues in hyaluronate.. Functionally, snake venom endo-hyaluronidase that degrades hyaluronan to smaller oligosaccharide fragments. In venom, it is not toxic by itself, but increases the diffusion of other venom proteins by degrading the extracellular matrix. In addition, it displays antiedematogenic activity. The polypeptide is Hyaluronidase-1 (Bitis arietans (African puff adder)).